Consider the following 364-residue polypeptide: MESTDSSGGPPPPQPNLPPGFRFHPTDEELVVHYLKRKAASAPLPVAIIAEVDLYKFDPWELPAKASFGEQEWYFFSPRDRKYPNGARPNRAATSGYWKATGTDKPVLASDGNQKVGVKKALVFYSGKPPKGVKSDWIMHEYRLIENKPNNRPPGCDFGNKKNSLRLDDWVLCRIYKKNNASRHVDNDKDHDMIDYIFRKIPPSLSMAAASTGLHQHHHNVSRSMNFFPGKFSGGGYGIFSDGGNTSIYDGGGMINNIGTDSVDHDNNADVVGLNHASSSGPMMMANLKRTLPVPYWPVADEEQDASPSKRFHGVGGGGGDCSNMSSSMMEETPPLMQQQGGVLGDGLFRTTSYQLPGLNWYSS.

The tract at residues 1–23 (MESTDSSGGPPPPQPNLPPGFRF) is disordered. A compositionally biased stretch (pro residues) spans 9–18 (GPPPPQPNLP). An NAC domain is found at 17-178 (LPPGFRFHPT…DWVLCRIYKK (162 aa)). A DNA-binding region spans residues 116 to 184 (VGVKKALVFY…IYKKNNASRH (69 aa)).

As to expression, stamen specific, in anthers from stage 8. Expressed in the outer integument, but seems not expressed in the embryo at the torpedo stage.

It localises to the nucleus. Transcription factor of the NAC family. Together with NAC018/NARS2, regulates embryogenesis by regulating the development and degeneration of ovule integuments, a process required for intertissue communication between the embryo and the maternal integument. This is NAC transcription factor 56 from Arabidopsis thaliana (Mouse-ear cress).